The following is a 371-amino-acid chain: Transcription factor bHLH77 (371 aa).

Disordered regions lie at residues 1-25, 65-206, and 352-371; these read MNMD…FGNG, SGGI…SLAE, and QSNN…KLEP. Residues 85–96 are compositionally biased toward polar residues; that stretch reads SQPTTQESNKSS. Positions 128 to 142 are enriched in low complexity; sequence SPASSSLTASNSKVS. The segment covering 165 to 190 has biased composition (basic and acidic residues); that stretch reads GVEKCDSKGDNKDDAKPPEAPKDYIH. Positions 197–247 constitute a bHLH domain; it reads QATDSHSLAERARREKISERMTLLQDLVPGCNRITGKAVMLDEIINYVQSL.

Homodimer. Interacts with IBH1. In terms of tissue distribution, expressed constitutively in roots, leaves, stems, and flowers.

It localises to the nucleus. The chain is Transcription factor bHLH77 (BHLH77) from Arabidopsis thaliana (Mouse-ear cress).